We begin with the raw amino-acid sequence, 130 residues long: Small ribosomal subunit protein uS8 (130 aa).

Belongs to the universal ribosomal protein uS8 family. As to quaternary structure, part of the 30S ribosomal subunit.

In terms of biological role, one of the primary rRNA binding proteins, it binds directly to 16S rRNA central domain where it helps coordinate assembly of the platform of the 30S subunit. The chain is Small ribosomal subunit protein uS8 from Natronomonas pharaonis (strain ATCC 35678 / DSM 2160 / CIP 103997 / JCM 8858 / NBRC 14720 / NCIMB 2260 / Gabara) (Halobacterium pharaonis).